A 397-amino-acid chain; its full sequence is DnaJ homolog subfamily A member 4 (397 aa).

The J domain occupies 4–70 (ETQYYDILGV…RDIYDQGGEQ (67 aa)). A Phosphoserine modification is found at S18. The CR-type zinc finger occupies 122–206 (GITKKLALQK…CSGAKVTREK (85 aa)). Zn(2+)-binding residues include C135, C138, C151, C154, C178, C181, C194, and C197. CXXCXGXG motif repeat units follow at residues 135-142 (CEKCEGIG), 151-158 (CPLCKGRG), 178-185 (CIECKGQG), and 194-201 (CENCSGAK). Basic and acidic residues predominate over residues 366–380 (EFNPNEQSWRQHREA). The disordered stretch occupies residues 366-397 (EFNPNEQSWRQHREAYEEDDEEPRAGVQCQTA). A Cysteine methyl ester modification is found at C394. Residue C394 is the site of S-farnesyl cysteine attachment. Positions 395 to 397 (QTA) are cleaved as a propeptide — removed in mature form.

Specifically expressed in testis and heart.

It is found in the membrane. The sequence is that of DnaJ homolog subfamily A member 4 (Dnaja4) from Mus musculus (Mouse).